An 88-amino-acid chain; its full sequence is Small integral membrane protein 13 (88 aa).

A helical transmembrane segment spans residues 10 to 30 (LVFVATLLIVLLLMVCGWYFV). Polar residues predominate over residues 48–61 (TGSQEGDNEQPSGS). Residues 48–88 (TGSQEGDNEQPSGSETEEDPSASPQKIRSARQRRPPVDAGH) form a disordered region. A phosphoserine mark is found at serine 59 and serine 61. Threonine 63 is subject to Phosphothreonine. A Phosphoserine modification is found at serine 70.

It belongs to the SMIM13 family.

It is found in the membrane. The sequence is that of Small integral membrane protein 13 (Smim13) from Mus musculus (Mouse).